We begin with the raw amino-acid sequence, 554 residues long: Acurin A biosynthesis cluster MFS-type transporter (554 aa).

The next 5 helical transmembrane spans lie at 24-44, 60-80, 96-116, 123-143, and 151-171; these read WLIFLAIGIATFVAALDTSII, LYIWIINTYLLSSTVSSAIVG, LLIFAVGSAISGAARDTGMLL, GLGGGSITTLSEVLVCDMVSL, and GILGAAWTLAAVVGPIMGGGF. Residue Asn174 is glycosylated (N-linked (GlcNAc...) asparagine). Transmembrane regions (helical) follow at residues 179–199, 219–239, and 251–271; these read WIFYINLPIAGSSLFLIVTLL, WGGITLLTLGVTAILLSLTWA, and IVPLILGFLGLLGFIAYEALP. Asn283 is a glycosylation site (N-linked (GlcNAc...) asparagine). 6 helical membrane-spanning segments follow: residues 289–309, 324–344, 352–372, 385–405, 417–437, and 496–516; these read LFVMAFIYSLLLFWVCYFLPI, VMLFPVATTTAPAGIVAGILM, SFQYIGFALMTIACGLFTLLD, ILFGVGTGIVFTTGLPPILAS, TWIFMRNFGAIWGTAIPAAVF, and VWQVSIAFCGVGFLLCFLVKA.

It belongs to the major facilitator superfamily.

It is found in the membrane. MFS-type transporter that may have a role in the biosynthesis of acurin A, a highly reduced polyketide coupled to a serine via a peptide bond; either in extra- or intracellular transport. The polypeptide is Acurin A biosynthesis cluster MFS-type transporter (Aspergillus aculeatus (strain ATCC 16872 / CBS 172.66 / WB 5094)).